The primary structure comprises 409 residues: Microfibrillar-associated protein 3-like (409 aa).

Residues 1–28 (MDRLKSHLTVCFLPSVPFLILVSTLATA) form the signal peptide. Residues 29 to 149 (KSVTNSTLNG…LRVIFTSGDM (121 aa)) are Extracellular-facing. N-linked (GlcNAc...) asparagine glycans are attached at residues Asn33, Asn37, Asn67, Asn111, and Asn135. The Ig-like C2-type domain occupies 47 to 141 (PVIIARTDHI…GTVNNTVTLR (95 aa)). Cys68 and Cys125 are joined by a disulfide. The chain crosses the membrane as a helical span at residues 150-172 (GVYYMVVCLVAFTIVMVLNITRL). Topologically, residues 173–409 (CMMSSHLKKT…NTCIIYESHV (237 aa)) are cytoplasmic. Tyr287 is subject to Phosphotyrosine; by EGFR. Disordered stretches follow at residues 292–311 (SLKR…LHEQ) and 320–385 (SVHP…VLPP). Residues Ser298, Ser303, Ser306, and Ser307 each carry the phosphoserine modification. The segment covering 339–355 (EVKDVEETELSAEHSPE) has biased composition (basic and acidic residues). The span at 363–377 (VTSTELTSEEPTPVE) shows a compositional bias: low complexity.

Highly expressed in testis.

It is found in the cell membrane. The protein resides in the nucleus. It localises to the cytoplasm. In terms of biological role, may participate in the nuclear signaling of EGFR and MAPK1/ERK2. May a have a role in metastasis. This Homo sapiens (Human) protein is Microfibrillar-associated protein 3-like (MFAP3L).